A 968-amino-acid polypeptide reads, in one-letter code: Probable transport protein MmpL2 (968 aa).

The next 11 helical transmembrane spans lie at 22–42 (FAVV…LAVP), 204–224 (VIAA…LVLI), 245–265 (IFSL…AAST), 297–317 (AHVI…LSFA), 328–348 (PIAI…PAVL), 378–398 (WPGP…LALP), 763–783 (YDLL…MMII), 787–807 (VVAA…SFGL), 815–835 (ILGI…LLAV), 866–886 (TGGV…LFVF), and 890–910 (RIIG…TLVV).

This sequence belongs to the resistance-nodulation-cell division (RND) (TC 2.A.6) family. MmpL subfamily.

The protein resides in the cell membrane. This is Probable transport protein MmpL2 (mmpL2) from Mycobacterium tuberculosis (strain CDC 1551 / Oshkosh).